The following is a 437-amino-acid chain: Eukaryotic peptide chain release factor subunit 1 (437 aa).

N5-methylglutamine is present on Gln-182. Lys-331 participates in a covalent cross-link: Glycyl lysine isopeptide (Lys-Gly) (interchain with G-Cter in ubiquitin). A Phosphoserine modification is found at Ser-421.

It belongs to the eukaryotic release factor 1 family. As to quaternary structure, component of the eRF1-eRF3-GTP ternary complex, composed of SUP45/eRF1, SUP35/eRF3 and GTP. Interacts with TPA1. Post-translationally, N5-methylated on Gln-182 by MTQ2.

It localises to the cytoplasm. Functionally, component of the eRF1-eRF3-GTP ternary complex, a ternary complex that mediates translation termination in response to the termination codons. The eRF1-eRF3-GTP complex binds to a stop codon in the ribosomal A-site. SUP45/eRF1 is responsible for stop codon recognition and inducing hydrolysis of peptidyl-tRNA. Following GTP hydrolysis by SUP35/eRF3, SUP35/eRF3 dissociates, permitting SUP45/eRF1 to accommodate fully in the A-site and mediate hydrolysis of peptidyl-tRNA. This Saccharomyces cerevisiae (strain ATCC 204508 / S288c) (Baker's yeast) protein is Eukaryotic peptide chain release factor subunit 1 (SUP45).